The sequence spans 320 residues: Heterogeneous nuclear ribonucleoprotein A1 (320 aa).

Met1 bears the N-acetylmethionine mark. Ser2 bears the N-acetylserine; in Heterogeneous nuclear ribonucleoprotein A1, N-terminally processed mark. Phosphoserine is present on Ser2. Lys3 is subject to N6-acetyllysine; alternate. A Glycyl lysine isopeptide (Lys-Gly) (interchain with G-Cter in SUMO2); alternate cross-link involves residue Lys3. Phosphoserine is present on residues Ser4 and Ser6. Residues 4–94 (SESPKEPEQL…EPKRAVSRED (91 aa)) are globular A domain. Lys8 is covalently cross-linked (Glycyl lysine isopeptide (Lys-Gly) (interchain with G-Cter in SUMO2)). 2 consecutive RRM domains span residues 14 to 97 (RKLF…DSQR) and 105 to 184 (KKIF…LCKQ). Position 22 is a phosphoserine (Ser22). Lys78 is covalently cross-linked (Glycyl lysine isopeptide (Lys-Gly) (interchain with G-Cter in SUMO2)). The segment at 95-185 (SQRPGAHLTV…EVRKALCKQE (91 aa)) is globular B domain. A Glycyl lysine isopeptide (Lys-Gly) (interchain with G-Cter in SUMO) cross-link involves residue Lys113. Glycyl lysine isopeptide (Lys-Gly) (interchain with G-Cter in SUMO2) cross-links involve residues Lys179 and Lys183. The segment at 188-216 (SASSSQRGRSGSGNFGGGRGGGFGGNDNF) is disordered. A Phosphoserine; by MKNK2 modification is found at Ser192. Arg194 is subject to Asymmetric dimethylarginine; alternate. At Arg194 the chain carries Dimethylated arginine; alternate. Position 194 is an omega-N-methylarginine; alternate (Arg194). Positions 197–216 (SGSGNFGGGRGGGFGGNDNF) are enriched in gly residues. Ser199 carries the post-translational modification Phosphoserine. Asymmetric dimethylarginine; alternate is present on residues Arg206, Arg218, Arg225, and Arg232. Arg206 bears the Dimethylated arginine; alternate mark. Omega-N-methylarginine; alternate occurs at positions 206, 218, 225, and 232. Positions 218–240 (RGGNFSGRGGFGGSRGGGGYGGS) are RNA-binding RGG-box. Position 225 is a dimethylated arginine; alternate (Arg225). The segment at 268–305 (NQSSNFGPMKGGNFGGRSSGPYGGGGQYFAKPRNQGGY) is nuclear targeting sequence. Residues 271–320 (SNFGPMKGGNFGGRSSGPYGGGGQYFAKPRNQGGYGGSSSSSSYGSGRRF) form a disordered region. A compositionally biased stretch (gly residues) spans 276-294 (MKGGNFGGRSSGPYGGGGQ). Position 284 is an omega-N-methylarginine (Arg284). Phosphoserine is present on Ser285. The residue at position 298 (Lys298) is an N6-acetyllysine; alternate. Lys298 participates in a covalent cross-link: Glycyl lysine isopeptide (Lys-Gly) (interchain with G-Cter in SUMO2); alternate. Arg300 carries the post-translational modification Omega-N-methylarginine. A compositionally biased stretch (low complexity) spans 308–320 (SSSSSSYGSGRRF). Ser309 is modified (phosphoserine). 3 positions are modified to phosphoserine; by MKNK2: Ser310, Ser311, and Ser312. 2 positions are modified to phosphoserine: Ser313 and Ser316. At Arg318 the chain carries Omega-N-methylarginine.

Identified in the spliceosome C complex. Identified in a IGF2BP1-dependent mRNP granule complex containing untranslated mRNAs. Interacts with SEPT6. Interacts with C9orf72. Interacts with KHDRBS1. Interacts with UBQLN2. Interacts with PPIA/CYPA. Post-translationally, sumoylated.

The protein resides in the nucleus. It localises to the cytoplasm. In terms of biological role, involved in the packaging of pre-mRNA into hnRNP particles, transport of poly(A) mRNA from the nucleus to the cytoplasm and modulation of splice site selection. Plays a role in the splicing of pyruvate kinase PKM by binding repressively to sequences flanking PKM exon 9, inhibiting exon 9 inclusion and resulting in exon 10 inclusion and production of the PKM M2 isoform. Binds to the IRES and thereby inhibits the translation of the apoptosis protease activating factor APAF1. May bind to specific miRNA hairpins. The chain is Heterogeneous nuclear ribonucleoprotein A1 (Hnrnpa1) from Rattus norvegicus (Rat).